The sequence spans 364 residues: D-alanine--D-alanine ligase (364 aa).

The 214-residue stretch at 134-347 folds into the ATP-grasp domain; it reads RRLACINGLK…YPDLLDELIN (214 aa). 167 to 222 is an ATP binding site; the sequence is ASEFGWPLFVKPCSLGSSVGIHKANNMDELNAAVADALRYDEEILVEEFIVGREIE. Positions 300, 314, and 316 each coordinate Mg(2+).

This sequence belongs to the D-alanine--D-alanine ligase family. Mg(2+) serves as cofactor. It depends on Mn(2+) as a cofactor.

The protein resides in the cytoplasm. It carries out the reaction 2 D-alanine + ATP = D-alanyl-D-alanine + ADP + phosphate + H(+). Its pathway is cell wall biogenesis; peptidoglycan biosynthesis. Its function is as follows. Cell wall formation. The sequence is that of D-alanine--D-alanine ligase from Legionella pneumophila (strain Paris).